The primary structure comprises 443 residues: Glutamine synthetase (443 aa).

A GS beta-grasp domain is found at Val-11–Glu-97. The GS catalytic domain maps to Pro-103–Val-443. Positions 126 and 128 each coordinate Mg(2+). Residue Glu-176 coordinates ATP. Mg(2+)-binding residues include Glu-181 and Glu-188. L-glutamate is bound at residue Gly-233. His-237 lines the Mg(2+) pocket. ATP is bound by residues His-239–Ser-241 and Ser-241. L-glutamate-binding residues include Arg-287, Glu-293, and Arg-305. Residues Arg-305 and Arg-310 each contribute to the ATP site. Glu-322 contributes to the Mg(2+) binding site. Arg-324 is a binding site for L-glutamate.

This sequence belongs to the glutamine synthetase family. As to quaternary structure, oligomer of 12 subunits arranged in the form of two hexagons. It depends on Mg(2+) as a cofactor. Requires Mn(2+) as cofactor.

The protein resides in the cytoplasm. It catalyses the reaction L-glutamate + NH4(+) + ATP = L-glutamine + ADP + phosphate + H(+). It carries out the reaction hydroxylamine + L-glutamate + ATP = L-glutamine hydroxamate + ADP + phosphate. With respect to regulation, the activity of this enzyme is not controlled by adenylation. Its function is as follows. Carries out the ATP-dependent synthesis of glutamine from ammonium nitrogen and glutamate. Exhibits both L-gamma-glutamylhydroxamate synthetase and gamma-glutamyltransferase activities when using hydroxylamine as substrate; in fact, the enzyme possesses low biosynthetic activity, suggesting that the reaction is biased towards the degradation of glutamine under ammonia-rich conditions. Might play some role in ammonia assimilation under ammonia-starvation conditions. Can also use GTP instead of ATP in the synthetase reaction, but not CTP or UTP. This Thermococcus kodakarensis (strain ATCC BAA-918 / JCM 12380 / KOD1) (Pyrococcus kodakaraensis (strain KOD1)) protein is Glutamine synthetase.